Consider the following 378-residue polypeptide: Protein RecA (378 aa).

Gly79–Thr86 is an ATP binding site.

Belongs to the RecA family.

It is found in the cytoplasm. Can catalyze the hydrolysis of ATP in the presence of single-stranded DNA, the ATP-dependent uptake of single-stranded DNA by duplex DNA, and the ATP-dependent hybridization of homologous single-stranded DNAs. It interacts with LexA causing its activation and leading to its autocatalytic cleavage. This Streptococcus pyogenes serotype M1 protein is Protein RecA.